Here is a 165-residue protein sequence, read N- to C-terminus: V-type proton ATPase 16 kDa proteolipid subunit (165 aa).

The Lumenal portion of the chain corresponds to 1–10 (MSSVFSGDET). Residues 11-33 (APFFGFLGAAAALVFSCMGAAYG) traverse the membrane as a helical segment. The Cytoplasmic portion of the chain corresponds to 34–55 (TAKSGVGVASMGVMRPELVMKS). A helical transmembrane segment spans residues 56–76 (IVPVVMAGVLGIYGLIIAVII). At 77 to 95 (STGINPKAKPYFLFDGYAH) the chain is on the lumenal side. The chain crosses the membrane as a helical span at residues 96-117 (LSSGLACGLAGLAAGMAIGIVG). Residues 118–129 (DAGVRANAQQPK) are Cytoplasmic-facing. The chain crosses the membrane as a helical span at residues 130–155 (LFVGMILILIFAEALALYGLIVGIIL). At 156–165 (SSRAGQSRAD) the chain is on the lumenal side.

It belongs to the V-ATPase proteolipid subunit family. As to quaternary structure, V-ATPase is a heteromultimeric enzyme composed of a peripheral catalytic V1 complex (main components: subunits A, B, C, D, E, and F) attached to an integral membrane V0 proton pore complex (main component: the proteolipid protein; which is present as a hexamer that forms the proton-conducting pore).

It localises to the vacuole membrane. Its function is as follows. Proton-conducting pore forming subunit of the membrane integral V0 complex of vacuolar ATPase. V-ATPase is responsible for acidifying a variety of intracellular compartments in eukaryotic cells. This chain is V-type proton ATPase 16 kDa proteolipid subunit (VATP-P1), found in Avena sativa (Oat).